The sequence spans 260 residues: Ribose-5-phosphate isomerase (260 aa).

The protein belongs to the ribose 5-phosphate isomerase family.

It localises to the cytoplasm. The catalysed reaction is aldehydo-D-ribose 5-phosphate = D-ribulose 5-phosphate. It participates in carbohydrate degradation; pentose phosphate pathway; D-ribose 5-phosphate from D-ribulose 5-phosphate (non-oxidative stage): step 1/1. This chain is Ribose-5-phosphate isomerase (RKI1), found in Candida glabrata (strain ATCC 2001 / BCRC 20586 / JCM 3761 / NBRC 0622 / NRRL Y-65 / CBS 138) (Yeast).